A 470-amino-acid polypeptide reads, in one-letter code: Ribulose bisphosphate carboxylase large chain (470 aa).

Lysine 5 bears the N6,N6,N6-trimethyllysine mark. 2 residues coordinate substrate: asparagine 114 and threonine 164. Residue lysine 166 is the Proton acceptor of the active site. Residue lysine 168 participates in substrate binding. Mg(2+) is bound by residues lysine 192, aspartate 194, and glutamate 195. Position 192 is an N6-carboxylysine (lysine 192). Histidine 285 (proton acceptor) is an active-site residue. Substrate-binding residues include arginine 286, histidine 318, and serine 370.

The protein belongs to the RuBisCO large chain family. Type I subfamily. As to quaternary structure, heterohexadecamer of 8 large chains and 8 small chains; disulfide-linked. The disulfide link is formed within the large subunit homodimers. It depends on Mg(2+) as a cofactor. The disulfide bond which can form in the large chain dimeric partners within the hexadecamer appears to be associated with oxidative stress and protein turnover.

The protein resides in the plastid. The protein localises to the chloroplast. It catalyses the reaction 2 (2R)-3-phosphoglycerate + 2 H(+) = D-ribulose 1,5-bisphosphate + CO2 + H2O. The enzyme catalyses D-ribulose 1,5-bisphosphate + O2 = 2-phosphoglycolate + (2R)-3-phosphoglycerate + 2 H(+). Its function is as follows. RuBisCO catalyzes two reactions: the carboxylation of D-ribulose 1,5-bisphosphate, the primary event in carbon dioxide fixation, as well as the oxidative fragmentation of the pentose substrate in the photorespiration process. Both reactions occur simultaneously and in competition at the same active site. The polypeptide is Ribulose bisphosphate carboxylase large chain (Kigelia africana (Sausage tree)).